A 462-amino-acid polypeptide reads, in one-letter code: Dipeptidyl peptidase 1 (462 aa).

The signal sequence occupies residues 1–24 (MGPWTHSLRAALLLVLLGVCTVSS). Residues Asn-29 and Asn-53 are each glycosylated (N-linked (GlcNAc...) asparagine). Intrachain disulfides connect Cys-30–Cys-118 and Cys-54–Cys-136. Positions 135-229 (ACFVGKKMAN…TDEIQQQILS (95 aa)) are excised as a propeptide. N-linked (GlcNAc...) asparagine glycosylation occurs at Asn-144. Intrachain disulfides connect Cys-254/Cys-297, Cys-290/Cys-330, and Cys-320/Cys-336. Residue Cys-257 is part of the active site. Asn-275 carries N-linked (GlcNAc...) asparagine glycosylation. The chloride site is built by Phe-301 and Tyr-303. Residue Tyr-346 participates in chloride binding. Active-site residues include His-404 and Asn-426.

It belongs to the peptidase C1 family. Tetramer of heterotrimers consisting of exclusion domain, heavy- and light chains. The cofactor is chloride. In terms of tissue distribution, broadly distributed, but higher levels found in liver, spleen, intestine, lung and kidney.

It is found in the lysosome. The catalysed reaction is Release of an N-terminal dipeptide, Xaa-Yaa-|-Zaa-, except when Xaa is Arg or Lys, or Yaa or Zaa is Pro.. Its function is as follows. Thiol protease. Has dipeptidylpeptidase activity. Active against a broad range of dipeptide substrates composed of both polar and hydrophobic amino acids. Proline cannot occupy the P1 position and arginine cannot occupy the P2 position of the substrate. Can act as both an exopeptidase and endopeptidase. Activates serine proteases such as elastase, cathepsin G and granzymes A and B. The protein is Dipeptidyl peptidase 1 (Ctsc) of Rattus norvegicus (Rat).